We begin with the raw amino-acid sequence, 493 residues long: Zinc finger CCCH domain-containing protein 34 (493 aa).

3 consecutive C3H1-type zinc fingers follow at residues 14 to 43 (RRCN…HADG), 45 to 71 (RFNR…HPPL), and 91 to 118 (VKAA…HEPL). The tract at residues 397-477 (MGECPQPANH…SFSDDFEGPK (81 aa)) is disordered. A compositionally biased stretch (basic residues) spans 409-420 (FRGRRKKNRGKQ). The segment covering 452–468 (SNSSFSHSTACTPNVRS) has biased composition (polar residues).

This is Zinc finger CCCH domain-containing protein 34 from Oryza sativa subsp. japonica (Rice).